The following is a 551-amino-acid chain: Solute carrier family 22 member 13 (551 aa).

Residues 1 to 20 are Cytoplasmic-facing; that stretch reads MAQFVQVLAEIGDFGRFQIQ. Residues 21 to 41 form a helical membrane-spanning segment; the sequence is LLILLCVLNFLSPFYFFAHVF. At 42–138 the chain is on the extracellular side; the sequence is MVLDEPHHCA…LVCDRKHLKD (97 aa). N57, N61, N92, and N104 each carry an N-linked (GlcNAc...) asparagine glycan. The chain crosses the membrane as a helical span at residues 139–159; it reads TTQSVFMAGLLVGTLMFGPLC. The Cytoplasmic portion of the chain corresponds to 160-167; the sequence is DRIGRKAT. A helical membrane pass occupies residues 168–188; it reads ILAQLLLFTLIGLATAFVPSF. The Extracellular segment spans residues 189 to 195; sequence ELYMALR. Residues 196–216 form a helical membrane-spanning segment; that stretch reads FAVATAVAGLSFSNVTLLTEW. The Cytoplasmic portion of the chain corresponds to 217 to 224; sequence VGPSWRTQ. The helical transmembrane segment at 225–245 threads the bilayer; sequence AVVLAQCNFSLGQMVLAGLAY. Over 246–251 the chain is Extracellular; sequence GFRNWR. A helical membrane pass occupies residues 252–272; that stretch reads LLQITGTAPGLLLFFYFWALP. At 273–332 the chain is on the cytoplasmic side; the sequence is ESARWLLTRGRMDEAIQLIQKAASVNRRKLSPELMNQLVPEKTGPSGNALDLFRHPQLRK. A helical membrane pass occupies residues 333–353; the sequence is VTLIIFCVWFVDSLGYYGLSL. Residue Q354 is a topological domain, extracellular. Residues 355–375 traverse the membrane as a helical segment; that stretch reads VGDFGLDVYLTQLIFGAVEVP. The Cytoplasmic portion of the chain corresponds to 376–397; that stretch reads ARCSSIFMMQRFGRKWSQLGTL. Residues 398–418 form a helical membrane-spanning segment; sequence VLGGLMCIIIIFIPADLPVVV. Topologically, residues 419 to 427 are extracellular; sequence TMLAVVGKM. A helical membrane pass occupies residues 428 to 448; it reads ATAAAFTISYVYSAELFPTIL. Residues 449–452 lie on the Cytoplasmic side of the membrane; it reads RQTG. A helical transmembrane segment spans residues 453–473; the sequence is MGLVGIFSRIGGILTPLVILL. At 474–478 the chain is on the extracellular side; that stretch reads GEYHA. Residues 479 to 499 traverse the membrane as a helical segment; sequence ALPMLIYGSLPIVAGLLCTLL. Residues 500–551 lie on the Cytoplasmic side of the membrane; sequence PETHGQGLKDTLQDLELGPHPRSPKSVPSEKETEAKGRTSSPGVAFVSSTYF. A disordered region spans residues 511-551; the sequence is LQDLELGPHPRSPKSVPSEKETEAKGRTSSPGVAFVSSTYF. Residues 527–536 show a composition bias toward basic and acidic residues; sequence PSEKETEAKG. A compositionally biased stretch (polar residues) spans 537–551; the sequence is RTSSPGVAFVSSTYF.

This sequence belongs to the major facilitator (TC 2.A.1) superfamily. Organic cation transporter (TC 2.A.1.19) family. Glycosylated. Ubiquitous. Highly expressed in kidneys and to a weaker extent in brain, heart, and intestine. In kidneys, expressed in proximal convoluted tubule. In kidneys, also expressed in cortical collecting duct, whereas glomerulus and thick ascending limb exhibit no expression.

It localises to the apical cell membrane. It carries out the reaction urate(out) + (S)-lactate(in) = urate(in) + (S)-lactate(out). It catalyses the reaction urate(out) + succinate(in) = urate(in) + succinate(out). The enzyme catalyses urate(out) + glutathione(in) = urate(in) + glutathione(out). The catalysed reaction is nicotinate(in) + urate(out) = nicotinate(out) + urate(in). It carries out the reaction orotate(out) + a carboxylate(in) = orotate(in) + a carboxylate(out). Its function is as follows. Anion antiporter that mediates the transport of urate, orotate and nicotinate in exchange for organic or inorganic anions. Translocates urate and orotate across the apical membrane of proximal tubule epithelial cells and involved in urate renal reabsorption. Possibly involved in orotate renal reabsorption and nicotinate intestinal reabsorption. Mediates urate uptake by an exchange with organic anions such as (S)-lactate, succinate, glutathione and nicotinate. Urate and orotate transports are Cl(-)-dependent. Shows similar transport characteristics as the urate/orotate renal antiporter SLC22A12/URAT1 and may act as a compensator of SLC22A12/URAT1 in certain conditions. The polypeptide is Solute carrier family 22 member 13 (Homo sapiens (Human)).